The following is a 345-amino-acid chain: S-adenosylmethionine:tRNA ribosyltransferase-isomerase (345 aa).

It belongs to the QueA family. Monomer.

Its subcellular location is the cytoplasm. It carries out the reaction 7-aminomethyl-7-carbaguanosine(34) in tRNA + S-adenosyl-L-methionine = epoxyqueuosine(34) in tRNA + adenine + L-methionine + 2 H(+). It functions in the pathway tRNA modification; tRNA-queuosine biosynthesis. Transfers and isomerizes the ribose moiety from AdoMet to the 7-aminomethyl group of 7-deazaguanine (preQ1-tRNA) to give epoxyqueuosine (oQ-tRNA). The sequence is that of S-adenosylmethionine:tRNA ribosyltransferase-isomerase from Helicobacter pylori (strain G27).